We begin with the raw amino-acid sequence, 267 residues long: uncharacterized protein (267 aa).

Residues 1-55 (MTEERKETFEEEINQSERIDADEEPLSRMSRKASRQSKQKQKQKQKPRQERGEST) form a disordered region. Acidic residues predominate over residues 9-24 (FEEEINQSERIDADEE). Over residues 29 to 46 (MSRKASRQSKQKQKQKQK) the composition is skewed to basic residues. Helical transmembrane passes span 93–115 (YKYG…WFQL), 135–157 (GFLV…IWAV), 173–195 (AVLG…FAIV), 199–221 (MLTV…LYVQ), and 234–256 (YIYC…WPFI).

The protein resides in the cell membrane. This is an uncharacterized protein from Bacillus subtilis (strain 168).